Consider the following 488-residue polypeptide: ATP synthase subunit beta (488 aa).

Gly164–Thr171 serves as a coordination point for ATP.

Belongs to the ATPase alpha/beta chains family. In terms of assembly, F-type ATPases have 2 components, CF(1) - the catalytic core - and CF(0) - the membrane proton channel. CF(1) has five subunits: alpha(3), beta(3), gamma(1), delta(1), epsilon(1). CF(0) has four main subunits: a(1), b(1), b'(1) and c(9-12).

The protein resides in the cellular thylakoid membrane. The catalysed reaction is ATP + H2O + 4 H(+)(in) = ADP + phosphate + 5 H(+)(out). Its function is as follows. Produces ATP from ADP in the presence of a proton gradient across the membrane. The catalytic sites are hosted primarily by the beta subunits. The protein is ATP synthase subunit beta of Prochlorococcus marinus (strain NATL2A).